We begin with the raw amino-acid sequence, 288 residues long: Glucose-1-phosphate thymidylyltransferase (288 aa).

A dTDP-alpha-D-glucose-binding site is contributed by glycine 8. 9 residues coordinate dTTP: glycine 8, glycine 11, threonine 12, arginine 13, lysine 23, glutamine 24, glutamine 80, glycine 85, and aspartate 108. The dTDP-alpha-D-glucose site is built by lysine 23, glutamine 24, glutamine 80, glycine 85, aspartate 108, asparagine 109, glycine 143, glutamate 158, lysine 159, valine 169, and aspartate 222. Aspartate 108 lines the Mg(2+) pocket. A Mg(2+)-binding site is contributed by aspartate 222.

It belongs to the glucose-1-phosphate thymidylyltransferase family. The cofactor is Mg(2+).

It carries out the reaction dTTP + alpha-D-glucose 1-phosphate + H(+) = dTDP-alpha-D-glucose + diphosphate. It participates in carbohydrate biosynthesis; dTDP-L-rhamnose biosynthesis. Catalyzes the conversion of glucose-1-phosphate and dTTP to dTDP-glucose and pyrophosphate. Involved in the biosynthesis of the dTDP-L-rhamnose which is a component of the critical linker, D-N-acetylglucosamine-L-rhamnose disaccharide, which connects the galactan region of arabinogalactan to peptidoglycan via a phosphodiester linkage. This Mycobacterium tuberculosis (strain CDC 1551 / Oshkosh) protein is Glucose-1-phosphate thymidylyltransferase (rmlA).